A 134-amino-acid chain; its full sequence is Complexin-1 (134 aa).

Positions 1–112 (MEFVMKQALG…PGCGDAAEEE (112 aa)) are disordered. The segment covering 15 to 81 (DMGKMLGGDE…IKKKEEREAE (67 aa)) has biased composition (basic and acidic residues). Positions 29–69 (DAAKKEEERQEALRQEEEERKAKYAKMEAEREAVRQGIRDK) form a coiled coil. An interaction with the SNARE complex region spans residues 48-70 (RKAKYAKMEAEREAVRQGIRDKY).

The protein belongs to the complexin/synaphin family. Binds to the SNARE core complex containing SNAP25, VAMP2 and STX1A.

It is found in the cytoplasm. The protein resides in the cytosol. It localises to the perikaryon. Its subcellular location is the presynapse. In terms of biological role, positively regulates a late step in synaptic vesicle exocytosis. Organizes the SNAREs into a cross-linked zigzag topology that, when interposed between the vesicle and plasma membranes, is incompatible with fusion, thereby preventing SNAREs from releasing neurotransmitters until an action potential arrives at the synapse. Also involved in glucose-induced secretion of insulin by pancreatic beta-cells. In Bos taurus (Bovine), this protein is Complexin-1 (CPLX1).